A 445-amino-acid polypeptide reads, in one-letter code: RING finger and transmembrane domain-containing protein 2 (445 aa).

Topologically, residues 1–183 are extracellular; sequence MWLLAAHQVL…LLAKLCFQHK (183 aa). Residues 12-41 form a disordered region; the sequence is KMQRRHSSNTDNIPPERSRSQALSPEASVD. The chain crosses the membrane as a helical span at residues 184–203; sequence LGIAVCIGMASTFAYANSTL. The Cytoplasmic segment spans residues 204-215; that stretch reads REQVSLKEKRSV. Residues 216 to 236 form a helical membrane-spanning segment; it reads LVILWILAFLAGNTMYVLYTF. The Extracellular segment spans residues 237 to 256; sequence SSQQLYSSLIFLKPNLETLD. A helical membrane pass occupies residues 257–277; the sequence is FFDLLWIVGIADFVLKYITIA. Residues 278-330 lie on the Cytoplasmic side of the membrane; it reads LKCLIVALPKIILAVKSKGKFYLVIEELSQLFRSLVPIQLWYKYIMGDDSSNS. Residues 331–351 form a helical membrane-spanning segment; it reads YFLGGVLIVLYSLCKSFDICG. Over 352–445 the chain is Extracellular; it reads RVGGLRKALK…GATSAHLQVY (94 aa). Residues 385 to 423 form an RING-type zinc finger; that stretch reads CAICQAEFRDPMILLCQHVFCEECLCLWLDRERTCPLCR.

It is found in the membrane. Its function is as follows. E3 ubiquitin-protein ligase that negatively regulates IL3-dependent cellular responses through IL3RA ubiquitination and degradation by the proteasome, having an anti-inflammatory effect. The polypeptide is RING finger and transmembrane domain-containing protein 2 (Rnft2) (Mus musculus (Mouse)).